Consider the following 267-residue polypeptide: Phosphonates import ATP-binding protein PhnC 2 (267 aa).

The 245-residue stretch at 3-247 (LSLDGVDLVH…ALDALYANEQ (245 aa)) folds into the ABC transporter domain. 36-43 (GPSGAGKT) contributes to the ATP binding site.

Belongs to the ABC transporter superfamily. Phosphonates importer (TC 3.A.1.9.1) family. In terms of assembly, the complex is composed of two ATP-binding proteins (PhnC), two transmembrane proteins (PhnE) and a solute-binding protein (PhnD).

It localises to the cell inner membrane. It carries out the reaction phosphonate(out) + ATP + H2O = phosphonate(in) + ADP + phosphate + H(+). Part of the ABC transporter complex PhnCDE involved in phosphonates import. Responsible for energy coupling to the transport system. The protein is Phosphonates import ATP-binding protein PhnC 2 of Pseudomonas aeruginosa (strain UCBPP-PA14).